The sequence spans 99 residues: Co-chaperonin GroES (99 aa).

Belongs to the GroES chaperonin family. Heptamer of 7 subunits arranged in a ring. Interacts with the chaperonin GroEL.

It localises to the cytoplasm. Functionally, together with the chaperonin GroEL, plays an essential role in assisting protein folding. The GroEL-GroES system forms a nano-cage that allows encapsulation of the non-native substrate proteins and provides a physical environment optimized to promote and accelerate protein folding. GroES binds to the apical surface of the GroEL ring, thereby capping the opening of the GroEL channel. This chain is Co-chaperonin GroES, found in Corynebacterium efficiens (strain DSM 44549 / YS-314 / AJ 12310 / JCM 11189 / NBRC 100395).